A 218-amino-acid chain; its full sequence is Small ribosomal subunit protein uS3c (218 aa).

The KH type-2 domain occupies 43–118 (IKNYVQKNMK…KLNISITRIE (76 aa)).

It belongs to the universal ribosomal protein uS3 family. Part of the 30S ribosomal subunit.

It is found in the plastid. The protein resides in the chloroplast. In Populus trichocarpa (Western balsam poplar), this protein is Small ribosomal subunit protein uS3c (rps3).